Consider the following 718-residue polypeptide: GMP synthase [glutamine-hydrolyzing] (718 aa).

The 205-residue stretch at 43–247 (VIVILDAGSQ…LIDICGCSAN (205 aa)) folds into the Glutamine amidotransferase type-1 domain. Active-site for GATase activity residues include Cys128, His221, and Glu223. Positions 248-457 (YTLDDREQQA…LGLSDSLVWR (210 aa)) constitute a GMPS ATP-PPase domain. 275–281 (SGGVDST) contributes to the ATP binding site.

In terms of assembly, homodimer.

It carries out the reaction XMP + L-glutamine + ATP + H2O = GMP + L-glutamate + AMP + diphosphate + 2 H(+). The protein operates within purine metabolism; GMP biosynthesis; GMP from XMP (L-Gln route): step 1/1. This is GMP synthase [glutamine-hydrolyzing] (guaA) from Dictyostelium discoideum (Social amoeba).